Here is a 127-residue protein sequence, read N- to C-terminus: Holo-[acyl-carrier-protein] synthase (127 aa).

Mg(2+)-binding residues include Asp9 and Glu58.

Belongs to the P-Pant transferase superfamily. AcpS family. Mg(2+) is required as a cofactor.

It localises to the cytoplasm. It carries out the reaction apo-[ACP] + CoA = holo-[ACP] + adenosine 3',5'-bisphosphate + H(+). In terms of biological role, transfers the 4'-phosphopantetheine moiety from coenzyme A to a Ser of acyl-carrier-protein. The protein is Holo-[acyl-carrier-protein] synthase of Shewanella oneidensis (strain ATCC 700550 / JCM 31522 / CIP 106686 / LMG 19005 / NCIMB 14063 / MR-1).